The chain runs to 229 residues: MKRAVVVFSGGQDSTTCLIQALHHYDDVHCITFDYGQRHRAEIDVARRLAGQLGASAHKVLDVGLLNELAISSLTRDNIPVPTQSEDGIPNTFVPGRNVLFLTLAAIYAYQVEAEAVITGVCETDFSGYPDCRDQFVQALNHAVCLGMARDIRFETPLMWLNKAETWALADYYGQLARVRHDTLTCYNGVQGDGCGHCAACHLRAHGLQQYLANPAAVMAALKRKSGLQ.

8–18 lines the ATP pocket; it reads FSGGQDSTTCL. Residues Cys-186, Cys-195, Cys-198, and Cys-201 each coordinate Zn(2+).

It belongs to the QueC family. Requires Zn(2+) as cofactor.

The catalysed reaction is 7-carboxy-7-deazaguanine + NH4(+) + ATP = 7-cyano-7-deazaguanine + ADP + phosphate + H2O + H(+). The protein operates within purine metabolism; 7-cyano-7-deazaguanine biosynthesis. Its function is as follows. Catalyzes the ATP-dependent conversion of 7-carboxy-7-deazaguanine (CDG) to 7-cyano-7-deazaguanine (preQ(0)). The chain is 7-cyano-7-deazaguanine synthase from Edwardsiella ictaluri (strain 93-146).